The following is a 245-amino-acid chain: MLLIPAIDLKEGRCVRLKQGLMEEATVFSDSPADTALHWFEQGARRLHLVDLNGAFAGVPQNLPAIKDILAAVAKDIPVQLGGGMRDLKTIGQYLDLGLNDVIIGTAAVKNPDLVREACKAFPGRIIVGLDAKDGMAAIDGWATVTGHHVIDLAKRFEDDGVNSIIYTDIGRDGMMSGVNIDATVKLAQSVRIPVIASGGLTGLDDIRALCAAEKHGVAGAITGRAIYEGSIDFAQAQQLADSLD.

Catalysis depends on D8, which acts as the Proton acceptor. Residue D131 is the Proton donor of the active site.

Belongs to the HisA/HisF family.

Its subcellular location is the cytoplasm. The enzyme catalyses 1-(5-phospho-beta-D-ribosyl)-5-[(5-phospho-beta-D-ribosylamino)methylideneamino]imidazole-4-carboxamide = 5-[(5-phospho-1-deoxy-D-ribulos-1-ylimino)methylamino]-1-(5-phospho-beta-D-ribosyl)imidazole-4-carboxamide. Its pathway is amino-acid biosynthesis; L-histidine biosynthesis; L-histidine from 5-phospho-alpha-D-ribose 1-diphosphate: step 4/9. In Neisseria gonorrhoeae (strain ATCC 700825 / FA 1090), this protein is 1-(5-phosphoribosyl)-5-[(5-phosphoribosylamino)methylideneamino] imidazole-4-carboxamide isomerase.